The primary structure comprises 657 residues: Serine/threonine kinase NLK (657 aa).

Residues serine 208 to leucine 554 enclose the Protein kinase domain. ATP-binding positions include isoleucine 214–valine 222 and lysine 237. Aspartate 391 serves as the catalytic Proton acceptor.

The protein belongs to the protein kinase superfamily. Ser/Thr protein kinase family. As to quaternary structure, component of the beta-catenin-lit-1 complex (also called the lit-1/wrm-1 complex or the wrm-1/lit-1 kinase complex) at least composed of lit-1 and wrm-1. Interacts with wrm-1 (via N-terminus); the interaction is direct and activates lit-1 kinase activity which leads to the phosphorylation of pop-1. This promotes pop-1 interaction with par-5 and translocation of pop-1 from the nucleus to the cytoplasm. Interacts with pop-1 (when phosphorylated on 'Ser-125'); the interaction is dependent on the beta-catenin-lit-1 complex. Mg(2+) serves as cofactor.

It is found in the cytoplasm. It localises to the cell cortex. Its subcellular location is the nucleus. It catalyses the reaction L-seryl-[protein] + ATP = O-phospho-L-seryl-[protein] + ADP + H(+). It carries out the reaction L-threonyl-[protein] + ATP = O-phospho-L-threonyl-[protein] + ADP + H(+). Its function is as follows. Has a role in the Wnt signaling pathway controlling the asymmetry of cell divisions during embryogenesis. Operates in the AB and EMS cell lineages influencing cell specification. Required for body wall muscle development, endoderm development, pop-1 asymmetry and T-cell division asymmetry. Component of the beta-catenin-lit-1 complex which promotes the phosphorylation, down-regulation and subcellular relocation of pop-1. Regulates plp-1 nuclear localization in embryos. Plays a role in male tail tip morphogenesis. The protein is Serine/threonine kinase NLK of Caenorhabditis briggsae.